A 673-amino-acid polypeptide reads, in one-letter code: MAVSEQTVARAASLRDELNLYNHHYYTLDAPLVSDAQYDSLLNELRAIEAEYPELRTPDSPTQRVGSAPLSKFPKVQHPVPMLSLGNAFNADDLAAWRRRAEQIIGTQPMSYTVEPKIDGLAVALTYINGVFSVGATRGNGEIGEDITANLRTIRDVPLRLQPIDGQALPERIEVRGEVYLPIESFNQLNERQAHAGEKVFANPRNAAAGSLRQLDSTITASRPLRFFAYAVGPFSGVELKSQAQTLDTLRTYGFSVNPDTRLFADFEAVIEYCHEWMSRRESLSYEVDGVVVKINDFAMQRELGVVGRDPRWAIAYKFPAREETTTLLNIVINVGRTGKLIPNAVLEPVSLGGTTVQHASLHNADYIISRDIRIGDRVVVKRAGDVIPYVIGPIVEARTGDERVWPAPTHCPTCGQPVEQIGDEVDIYCVNNTCPARLIRSIEHWVSRGAMDIVGMGERQASQFVEMGLIKSIPDIYRLTVDSFGGREGYGERRVANLLNAIEESKRRPLDRVITALGINGVGTVAAADLARYFRSLPALAQATIEQLTAIEGIGGSTAQSVVDFFNTPANQQLIAELLALGLKAEPSEVAELQSDRLAGKSFVITGTLPGISREAAQALIEAHGGKVGGSVSKKTDYLLAGEAAGSKLTKAQSLGVKVLSMDELHALLVDE.

NAD(+)-binding positions include 35 to 39, 84 to 85, and Glu-115; these read DAQYD and SL. The N6-AMP-lysine intermediate role is filled by Lys-117. The NAD(+) site is built by Arg-138, Glu-178, Lys-294, and Lys-318. Residues Cys-412, Cys-415, Cys-430, and Cys-435 each coordinate Zn(2+). The BRCT domain occupies 594-673; sequence LQSDRLAGKS…DELHALLVDE (80 aa).

Belongs to the NAD-dependent DNA ligase family. LigA subfamily. Mg(2+) serves as cofactor. The cofactor is Mn(2+).

The enzyme catalyses NAD(+) + (deoxyribonucleotide)n-3'-hydroxyl + 5'-phospho-(deoxyribonucleotide)m = (deoxyribonucleotide)n+m + AMP + beta-nicotinamide D-nucleotide.. Its function is as follows. DNA ligase that catalyzes the formation of phosphodiester linkages between 5'-phosphoryl and 3'-hydroxyl groups in double-stranded DNA using NAD as a coenzyme and as the energy source for the reaction. It is essential for DNA replication and repair of damaged DNA. The sequence is that of DNA ligase from Herpetosiphon aurantiacus (strain ATCC 23779 / DSM 785 / 114-95).